Reading from the N-terminus, the 157-residue chain is Transcription elongation factor GreA (157 aa).

Residues 12–74 (LKKLEEELEY…TLEAMLKNAK (63 aa)) adopt a coiled-coil conformation.

It belongs to the GreA/GreB family.

Necessary for efficient RNA polymerase transcription elongation past template-encoded arresting sites. The arresting sites in DNA have the property of trapping a certain fraction of elongating RNA polymerases that pass through, resulting in locked ternary complexes. Cleavage of the nascent transcript by cleavage factors such as GreA or GreB allows the resumption of elongation from the new 3'terminus. GreA releases sequences of 2 to 3 nucleotides. The polypeptide is Transcription elongation factor GreA (Caldanaerobacter subterraneus subsp. tengcongensis (strain DSM 15242 / JCM 11007 / NBRC 100824 / MB4) (Thermoanaerobacter tengcongensis)).